The chain runs to 250 residues: tRNA (guanine-N(7)-)-methyltransferase (250 aa).

Residues Glu79, Glu104, Asp131, and Asp154 each contribute to the S-adenosyl-L-methionine site. Asp154 is an active-site residue. Substrate contacts are provided by residues Lys158, Asp190, and 228–231; that span reads TKFE.

It belongs to the class I-like SAM-binding methyltransferase superfamily. TrmB family.

The catalysed reaction is guanosine(46) in tRNA + S-adenosyl-L-methionine = N(7)-methylguanosine(46) in tRNA + S-adenosyl-L-homocysteine. It functions in the pathway tRNA modification; N(7)-methylguanine-tRNA biosynthesis. Catalyzes the formation of N(7)-methylguanine at position 46 (m7G46) in tRNA. The polypeptide is tRNA (guanine-N(7)-)-methyltransferase (Actinobacillus pleuropneumoniae serotype 5b (strain L20)).